A 348-amino-acid chain; its full sequence is D-lactate dehydrogenase kk1H (348 aa).

NAD(+) contacts are provided by residues 158 to 159 (RI), Asp178, 208 to 209 (CP), 235 to 237 (TSR), and Asp261. The active site involves Arg237. Residue Glu266 is part of the active site. The active-site Proton donor is His298.

The protein belongs to the D-isomer specific 2-hydroxyacid dehydrogenase family.

It participates in secondary metabolite biosynthesis. In terms of biological role, D-lactate dehydrogenase; part of the gene cluster that mediates the biosynthesis of KK-1, a novel cyclic depsipeptide with 10 residues which is a promising active compound with high activity against many plant pathogens, especially Botrytis cinerea. Within the pathway, kk1H catalyzes in the synthesis of D-lactic acid from pyruvic acid, which is recognized by the A domain of the first kk1B module. The nonribosomal peptide synthetase (NRPS) kk1B catalyzes the elongation and cyclization of the decapeptide chain composed of 1 D-lactic acid residue (D-Lac), 1 pipecolic acid residue (Pip), 1 aspartic acid residue (Asp), 1 isoleucine residue (Ile), 1 glycine residue (Gly), 1 tyrosine residue (Tyr) and 4 valine residues (Val). The Asp, Ile and 3 Val residues are N-methylated by the 5 methyltransferase domains from the NRPS (found in modules 3, 5, 6, 7 and 9), whereas the Tyr residue is O-methylated by the cluster encoded O-methyltransferase kk1A. The thioesterase kk1J is likely to be involved in the corrective mechanism of peptide chain synthesis. The D-lactate dehydrogenase kk1H is involved in the synthesis of D-lactic acid from pyruvic acid, which is recognized by the A domain of the first kk1B module. The pyrroline-5-carboxylate reductase kk1I is involved in the synthesis of the L-pipecolic acid residue of KK-1 from delta-1-pyrroline-5-carboxylate (P5C), a metabolic intermediate of lysine. It still is unclear how kk1C and kk1D are involved in the production of KK-1. This Curvularia clavata protein is D-lactate dehydrogenase kk1H.